We begin with the raw amino-acid sequence, 665 residues long: Prelamin-A/C (665 aa).

M1 is modified (N-acetylmethionine). Residues M1–R25 form a disordered region. Residues M1–E33 are head. Residues M1–A130 are interaction with MLIP. T3 is subject to Phosphothreonine. Position 5 is a phosphoserine (S5). The residue at position 10 (T10) is a Phosphothreonine. S12 and S18 each carry phosphoserine. T19 is subject to Phosphothreonine. At S22 the chain carries Phosphoserine. The IF rod domain maps to E31–L387. At K32 the chain carries N6-acetyllysine; alternate. K32 is modified (N6-succinyllysine; alternate). K32 participates in a covalent cross-link: Glycyl lysine isopeptide (Lys-Gly) (interchain with G-Cter in SUMO2); alternate. Residues D34 to V70 are coil 1A. Phosphoserine is present on residues S51, S66, and S71. Positions S71–A80 are linker 1. Residues K78 and K97 each carry the N6-acetyllysine modification. The tract at residues Y81 to T218 is coil 1B. K97 is covalently cross-linked (Glycyl lysine isopeptide (Lys-Gly) (interchain with G-Cter in SUMO2)). A Phosphoserine modification is found at S107. An N6-acetyllysine mark is found at K108, K114, K123, K135, K144, and K155. An N6-acetyllysine; alternate modification is found at K171. At K171 the chain carries N6-succinyllysine; alternate. K171 is covalently cross-linked (Glycyl lysine isopeptide (Lys-Gly) (interchain with G-Cter in SUMO2); alternate). Residues K180, K201, and K208 each carry the N6-acetyllysine modification. K201 is covalently cross-linked (Glycyl lysine isopeptide (Lys-Gly) (interchain with G-Cter in SUMO2); alternate). A Glycyl lysine isopeptide (Lys-Gly) (interchain with G-Cter in SUMO); alternate cross-link involves residue K201. A Glycyl lysine isopeptide (Lys-Gly) (interchain with G-Cter in SUMO2) cross-link involves residue K208. S212 carries the post-translational modification Phosphoserine. Glycyl lysine isopeptide (Lys-Gly) (interchain with G-Cter in SUMO2) cross-links involve residues K219 and K233. Positions K219–A242 are linker 2. N6-acetyllysine is present on residues K233, K260, K265, and K270. The tract at residues D243–E383 is coil 2. K260 is covalently cross-linked (Glycyl lysine isopeptide (Lys-Gly) (interchain with G-Cter in SUMO2); alternate). K270 participates in a covalent cross-link: Glycyl lysine isopeptide (Lys-Gly) (interchain with G-Cter in SUMO2); alternate. Residues S277, S282, S301, and S307 each carry the phosphoserine modification. K311 participates in a covalent cross-link: Glycyl lysine isopeptide (Lys-Gly) (interchain with G-Cter in SUMO2); alternate. K311, K316, and K341 each carry N6-acetyllysine. Residues K366 and K378 each participate in a glycyl lysine isopeptide (Lys-Gly) (interchain with G-Cter in SUMO2) cross-link. The tract at residues E384–V442 is disordered. Residues E384–M665 form a tail region. A phosphoserine mark is found at S390, S392, S395, S398, S403, S404, S406, S407, S409, and S414. S392 carries the phosphoserine; by CDK1 modification. The segment covering S395 to S409 has biased composition (low complexity). At T416 the chain carries Phosphothreonine. N6-acetyllysine is present on residues K417 and K420. Residues K417 and K420 each participate in a glycyl lysine isopeptide (Lys-Gly) (interchain with G-Cter in SUMO2) cross-link. Positions K417–E422 match the Nuclear localization signal motif. Phosphoserine is present on residues S423, S426, S429, and S431. Positions S428–R545 constitute an LTD domain. Residue K450 forms a Glycyl lysine isopeptide (Lys-Gly) (interchain with G-Cter in SUMO2); alternate linkage. An N6-acetyllysine mark is found at K450 and K457. Phosphoserine is present on residues S458, E460, and S463. K486 carries the post-translational modification N6-acetyllysine. Residue K486 forms a Glycyl lysine isopeptide (Lys-Gly) (interchain with G-Cter in SUMO2) linkage. T496 is modified (phosphothreonine). S500 bears the Phosphoserine mark. A phosphothreonine mark is found at T505 and T510. A phosphoserine mark is found at S533 and S546. A Phosphothreonine modification is found at T548. The disordered stretch occupies residues N553–D577. A phosphoserine mark is found at S570, C572, and S573. K599 is covalently cross-linked (Glycyl lysine isopeptide (Lys-Gly) (interchain with G-Cter in SUMO2); alternate). K599 participates in a covalent cross-link: Glycyl lysine isopeptide (Lys-Gly) (interchain with G-Cter in SUMO1); alternate. S613, S614, S617, and S620 each carry phosphoserine. S626 and S629 each carry an O-linked (GlcNAc) serine glycan. Residues S629, S633, S637, and S653 each carry the phosphoserine modification. Positions L648 to C662 are cleaved as a propeptide — removed in Lamin-A/C form. C662 is subject to Cysteine methyl ester. C662 carries S-farnesyl cysteine lipidation. The propeptide at S663–M665 is removed in Prelamin-A/C form and in Lamin-A/C form.

The protein belongs to the intermediate filament family. As to quaternary structure, homodimer of lamin A and lamin C. Lamin dimers then assemble into dimeric head-to-tail polymers. Ultimately, two head-to-tail polymers assemble laterally into a protofilament with a uniformly shaped rod of 3.5 nm in diameter. Interacts with lamin-associated polypeptides IA, IB and TMPO-alpha, RB1 and with emerin. Proteolytically processed isoform A interacts with NARF. Interacts with SREBF1, SREBF2, SUN1, SUN2 and TMEM43. Interacts with TMEM201. Prelamin-A/C interacts with EMD. Interacts with DMPK; may regulate nuclear envelope stability. Interacts with MLIP. Interacts with SUV39H1; the interaction increases stability of SUV39H1. Interacts with ITSN1 isoform 2. Interacts with IFFO1; the interaction forms an interior nucleoskeleton and the recruitment to DNA double-strand breaks. Interacts with EMD. In terms of assembly, interacts (via C-terminus) with LEMD2 (via N-terminus) (in vitro). Post-translationally, proteolytic cleavage of the C-terminal of 18 residues of prelamin-A/C results in the production of lamin-A/C. The prelamin-A/C maturation pathway includes farnesylation of CAAX motif by protein farnesyltransferase (FNTA and FNTB), removal of the last three amino acids (-AAX) by RCE1/FACE2 and/or ZMPSTE24, methylation of the C-terminal cysteine by ICMT and endoproteolytic removal of the last 15 C-terminal amino acids by ZMPSTE24. Proteolytic cleavage requires prior farnesylation and methylation, and absence of these blocks cleavage. Farnesylation of prelamin-A/C facilitates nuclear envelope targeting. In terms of processing, phosphorylation plays a key role in lamin organization, subcellular localization and nuclear envelope disintegration. Phosphorylation by CDK1 at Ser-22 and Ser-392 at the onset of mitosis drives lamin disassembly and nuclear envelope breakdown. Phosphorylation at Ser-22 and Ser-392 during interphase promotes localization to the nucleoplasm and regulates lamina assembly. Phosphorylation at Ser-22, Ser-392 and Ser-629 during interphase causes redistribution between the nucleus and the cytoplasm. Phosphorylation at Ser-22 by CDK1 regulates matrix stiffness. Phosphorylation status of Ser-22 determines its localization between double-strand break (DSB) sites and the nuclear matrix. Phosphorylated by ATR at Ser-282 in response to DNA damage, leading to lamin disassembly and nuclear envelope rupture. Phosphorylation also regulates stability in micronuclei arising from genome instability: phosphorylation at Ser-395 by ATR in response to genome instability and double-stranded DNA breaks primes LMNA for subsequent phosphorylation at Ser-392 by CDK1 and micronuclei envelope rupture. The rupture of micronuclear envelope triggers the cGAS-STING pathway thereby activating the type I interferon response and innate immunity. Post-translationally, isoform C is phosphorylated on Ser-392, Ser-407 and Ser-409 at interphase. Acetylation by KAT8 is required for nuclear architecture. In terms of processing, sumoylation is necessary for the localization to the nuclear envelope. Post-translationally, the N-terminus is blocked. Expressed in liver and in bone marrow (at protein level). Expressed in cardiomyocytes. As to expression, specifically expressed in germ cells.

It is found in the nucleus lamina. The protein localises to the nucleus envelope. The protein resides in the nucleus. It localises to the nucleoplasm. Its subcellular location is the nucleus matrix. In terms of biological role, lamins are intermediate filament proteins that assemble into a filamentous meshwork, and which constitute the major components of the nuclear lamina, a fibrous layer on the nucleoplasmic side of the inner nuclear membrane. Lamins provide a framework for the nuclear envelope, bridging the nuclear envelope and chromatin, thereby playing an important role in nuclear assembly, chromatin organization, nuclear membrane and telomere dynamics. Lamin A and C also regulate matrix stiffness by conferring nuclear mechanical properties. The structural integrity of the lamina is strictly controlled by the cell cycle, as seen by the disintegration and formation of the nuclear envelope in prophase and telophase, respectively. Lamin A and C are present in equal amounts in the lamina of mammals. Also invoved in DNA repair: recruited by DNA repair proteins XRCC4 and IFFO1 to the DNA double-strand breaks (DSBs) to prevent chromosome translocation by immobilizing broken DNA ends. Required for normal development of peripheral nervous system and skeletal muscle and for muscle satellite cell proliferation. Required for osteoblastogenesis and bone formation. Also prevents fat infiltration of muscle and bone marrow, helping to maintain the volume and strength of skeletal muscle and bone. Required for cardiac homeostasis. Functionally, prelamin-A/C can accelerate smooth muscle cell senescence. It acts to disrupt mitosis and induce DNA damage in vascular smooth muscle cells (VSMCs), leading to mitotic failure, genomic instability, and premature senescence. Isoform C2 may have a role in determining the organization of nuclear and chromosomal structures during spermatogenesis. The sequence is that of Prelamin-A/C (Lmna) from Mus musculus (Mouse).